Consider the following 195-residue polypeptide: Putative kinase protein 143R (195 aa).

8–16 (GIIGAGKST) is an ATP binding site. Glu31, Tyr43, and Gln54 together coordinate substrate. Glu78 (proton acceptor) is an active-site residue. Residues Arg79 and Glu142 each contribute to the substrate site.

This sequence belongs to the DCK/DGK family.

This Acheta domesticus (House cricket) protein is Putative kinase protein 143R.